A 572-amino-acid polypeptide reads, in one-letter code: Proline--tRNA ligase (572 aa).

Belongs to the class-II aminoacyl-tRNA synthetase family. ProS type 1 subfamily. Homodimer.

It localises to the cytoplasm. It catalyses the reaction tRNA(Pro) + L-proline + ATP = L-prolyl-tRNA(Pro) + AMP + diphosphate. Its function is as follows. Catalyzes the attachment of proline to tRNA(Pro) in a two-step reaction: proline is first activated by ATP to form Pro-AMP and then transferred to the acceptor end of tRNA(Pro). As ProRS can inadvertently accommodate and process non-cognate amino acids such as alanine and cysteine, to avoid such errors it has two additional distinct editing activities against alanine. One activity is designated as 'pretransfer' editing and involves the tRNA(Pro)-independent hydrolysis of activated Ala-AMP. The other activity is designated 'posttransfer' editing and involves deacylation of mischarged Ala-tRNA(Pro). The misacylated Cys-tRNA(Pro) is not edited by ProRS. The polypeptide is Proline--tRNA ligase (Salmonella newport (strain SL254)).